The primary structure comprises 569 residues: Archaeosine synthase (569 aa).

The PUA domain occupies 495-569 (SGGKDINYIE…ALVNIRNVKS (75 aa)).

Belongs to the archaeosine synthase type 1 family. As to quaternary structure, homodimer.

The enzyme catalyses 7-cyano-7-carbaguanosine(15) in tRNA + L-glutamine + H2O = archaeosine(15) in tRNA + L-glutamate. It functions in the pathway tRNA modification; archaeosine-tRNA biosynthesis. Functionally, is responsible for the final step in the biosynthesis of archaeosine, a modified nucleoside present in the dihydrouridine loop (D-loop) of archaeal tRNA. Catalyzes the conversion of 7-cyano-7-deazaguanine (preQ0)-modified tRNA to archaeosine-tRNA, transforming a nitrile group to a formamidine group. Can use either glutamine, asparagine or ammonium as amino donor. The chain is Archaeosine synthase from Methanocaldococcus jannaschii (strain ATCC 43067 / DSM 2661 / JAL-1 / JCM 10045 / NBRC 100440) (Methanococcus jannaschii).